Reading from the N-terminus, the 806-residue chain is Mitochondrial intermediate peptidase (806 aa).

Residues 1-29 (MLSRHLTVLRSACRVSHDLRVPSTQAVRK) constitute a mitochondrion transit peptide. Histidine 581 is a Zn(2+) binding site. Glutamate 582 is a catalytic residue. Positions 585 and 588 each coordinate Zn(2+).

Belongs to the peptidase M3 family. It depends on Zn(2+) as a cofactor.

It is found in the mitochondrion matrix. The enzyme catalyses Release of an N-terminal octapeptide as second stage of processing of some proteins imported into the mitochondrion.. Functionally, cleaves proteins, imported into the mitochondrion, to their mature size. While most mitochondrial precursor proteins are processed to the mature form in one step by mitochondrial processing peptidase (MPP), the sequential cleavage by MIP of an octapeptide after initial processing by MPP is a required step for a subgroup of nuclear-encoded precursor proteins destined for the matrix or the inner membrane. The polypeptide is Mitochondrial intermediate peptidase (OCT1) (Malassezia globosa (strain ATCC MYA-4612 / CBS 7966) (Dandruff-associated fungus)).